We begin with the raw amino-acid sequence, 439 residues long: Xylose isomerase (439 aa).

Residues His101 and Asp104 contribute to the active site. Mg(2+) is bound by residues Glu232, Glu268, His271, Asp296, Asp307, Asp309, and Asp339.

This sequence belongs to the xylose isomerase family. Homotetramer. The cofactor is Mg(2+).

Its subcellular location is the cytoplasm. It catalyses the reaction alpha-D-xylose = alpha-D-xylulofuranose. The protein is Xylose isomerase (xylA) of Thermoanaerobacterium thermosaccharolyticum (strain ATCC 7956 / DSM 571 / NCIMB 9385 / NCA 3814 / NCTC 13789 / WDCM 00135 / 2032) (Clostridium thermosaccharolyticum).